The sequence spans 358 residues: Phospho-N-acetylmuramoyl-pentapeptide-transferase (358 aa).

10 consecutive transmembrane segments (helical) span residues Arg25–Ile45, Thr73–Leu93, Tyr97–Tyr117, Met134–Met154, Tyr172–Thr192, Gly197–Ala217, Gly233–Trp253, Val261–Ile281, Met286–Val306, and Lys335–Leu355.

The protein belongs to the glycosyltransferase 4 family. MraY subfamily. Requires Mg(2+) as cofactor.

Its subcellular location is the cell inner membrane. The catalysed reaction is UDP-N-acetyl-alpha-D-muramoyl-L-alanyl-gamma-D-glutamyl-meso-2,6-diaminopimeloyl-D-alanyl-D-alanine + di-trans,octa-cis-undecaprenyl phosphate = di-trans,octa-cis-undecaprenyl diphospho-N-acetyl-alpha-D-muramoyl-L-alanyl-D-glutamyl-meso-2,6-diaminopimeloyl-D-alanyl-D-alanine + UMP. It functions in the pathway cell wall biogenesis; peptidoglycan biosynthesis. Catalyzes the initial step of the lipid cycle reactions in the biosynthesis of the cell wall peptidoglycan: transfers peptidoglycan precursor phospho-MurNAc-pentapeptide from UDP-MurNAc-pentapeptide onto the lipid carrier undecaprenyl phosphate, yielding undecaprenyl-pyrophosphoryl-MurNAc-pentapeptide, known as lipid I. This Geobacter sulfurreducens (strain ATCC 51573 / DSM 12127 / PCA) protein is Phospho-N-acetylmuramoyl-pentapeptide-transferase.